Reading from the N-terminus, the 160-residue chain is Heme transporter hrg-5 (160 aa).

The chain crosses the membrane as a helical span at residues 21-41; it reads IALTILDILIGFSNILSYAIQ. N44 carries N-linked (GlcNAc...) asparagine glycosylation. Helical transmembrane passes span 47–67, 89–109, and 123–142; these read ALTLTAMVTLVACHTLQMFLA, ITLGFLALGCFVVCFIIAGVT, and FTGLWATAITKYTWQNALLA. A glycan (N-linked (GlcNAc...) asparagine) is linked at N144.

Belongs to the HRG family.

It localises to the membrane. Its function is as follows. Heme transporter. The sequence is that of Heme transporter hrg-5 (hrg-5) from Caenorhabditis elegans.